A 272-amino-acid polypeptide reads, in one-letter code: Large ribosomal subunit protein uL2 (272 aa).

The tract at residues 247–272 (PWGQPCKGFKTRNNKRTNSSIIKRRK) is disordered. Residues 262-272 (RTNSSIIKRRK) are compositionally biased toward polar residues.

Belongs to the universal ribosomal protein uL2 family. As to quaternary structure, part of the 50S ribosomal subunit. Forms a bridge to the 30S subunit in the 70S ribosome.

Functionally, one of the primary rRNA binding proteins. Required for association of the 30S and 50S subunits to form the 70S ribosome, for tRNA binding and peptide bond formation. It has been suggested to have peptidyltransferase activity; this is somewhat controversial. Makes several contacts with the 16S rRNA in the 70S ribosome. The protein is Large ribosomal subunit protein uL2 of Bdellovibrio bacteriovorus (strain ATCC 15356 / DSM 50701 / NCIMB 9529 / HD100).